Here is a 600-residue protein sequence, read N- to C-terminus: Glutamine--fructose-6-phosphate aminotransferase [isomerizing] (600 aa).

Cys-2 functions as the Nucleophile; for GATase activity in the catalytic mechanism. A Glutamine amidotransferase type-2 domain is found at 2–217 (CGIVGFIGEQ…DKEIVIVMKE (216 aa)). SIS domains follow at residues 283–422 (IRNA…AKGE) and 452–590 (LAKQ…VDKP). Lys-595 acts as the For Fru-6P isomerization activity in catalysis.

In terms of assembly, homodimer.

It is found in the cytoplasm. It catalyses the reaction D-fructose 6-phosphate + L-glutamine = D-glucosamine 6-phosphate + L-glutamate. In terms of biological role, catalyzes the first step in hexosamine metabolism, converting fructose-6P into glucosamine-6P using glutamine as a nitrogen source. This is Glutamine--fructose-6-phosphate aminotransferase [isomerizing] from Bacillus anthracis.